Reading from the N-terminus, the 464-residue chain is Transcription factor EAT1 (464 aa).

The basic motif; degenerate stretch occupies residues G261–R274. Positions G261–L310 constitute a bHLH domain. The interval E275–L310 is helix-loop-helix motif. The segment at Q338 to D357 is disordered.

This sequence belongs to the bHLH protein family. In terms of assembly, interacts with TDR.

The protein localises to the nucleus. Its function is as follows. Transcription factor involved in the regulation of tapetum programmed cell death (PCD) and degradation during male reproductive development. Interacts with TDR and promote tapetal PCD by regulating the expression of RTS, and the two lipid-transfer proteins C4 and C6, which function in microspore development. Acts downstream from and interacts with TDR in the regulation of tapetal PCD. Regulates directly the aspartic protease AP25 and AP37 during tapetal PCD. May not target the cysteine protease CP1. The polypeptide is Transcription factor EAT1 (Oryza sativa subsp. japonica (Rice)).